Here is a 402-residue protein sequence, read N- to C-terminus: B3 domain-containing protein Os01g0723500 (402 aa).

Positions 18-121 (RPHFFKVLVG…RFTAMVFDRT (104 aa)) form a DNA-binding region, TF-B3 1. The tract at residues 126-203 (EDLMGGGGGD…VKNEEDADEL (78 aa)) is disordered. The segment covering 152-162 (DAARPKKDSVG) has biased composition (basic and acidic residues). Over residues 173 to 186 (SGGQPLQIVDSSWT) the composition is skewed to polar residues. A DNA-binding region (TF-B3 2) is located at residues 289–381 (CVIRMSTMHV…EFRVHIFRVV (93 aa)).

The protein localises to the nucleus. In Oryza sativa subsp. japonica (Rice), this protein is B3 domain-containing protein Os01g0723500.